The chain runs to 66 residues: Large ribosomal subunit protein bL35 (66 aa).

A compositionally biased stretch (basic residues) spans 1–16 (MPKMKTHKGSAKRFKK). Positions 1–24 (MPKMKTHKGSAKRFKKTGTGQLKR) are disordered.

This sequence belongs to the bacterial ribosomal protein bL35 family.

This chain is Large ribosomal subunit protein bL35, found in Anoxybacillus flavithermus (strain DSM 21510 / WK1).